A 100-amino-acid chain; its full sequence is Ferredoxin-2 (100 aa).

In terms of domain architecture, 2Fe-2S ferredoxin-type spans 4–97 (YKVTLINEEE…DCTIMTHQES (94 aa)). [2Fe-2S] cluster-binding residues include cysteine 42, cysteine 47, cysteine 50, and cysteine 81.

This sequence belongs to the 2Fe2S plant-type ferredoxin family. It depends on [2Fe-2S] cluster as a cofactor.

Ferredoxins are iron-sulfur proteins that transfer electrons in a wide variety of metabolic reactions. The polypeptide is Ferredoxin-2 (Aphanothece sacrum).